The following is a 209-amino-acid chain: Large ribosomal subunit protein uL4 (209 aa).

The interval 46-71 (GTSSTKTRSEVRGSSKKPWKQKGTGR) is disordered. Positions 59 to 71 (SSKKPWKQKGTGR) are enriched in basic residues.

The protein belongs to the universal ribosomal protein uL4 family. Part of the 50S ribosomal subunit.

One of the primary rRNA binding proteins, this protein initially binds near the 5'-end of the 23S rRNA. It is important during the early stages of 50S assembly. It makes multiple contacts with different domains of the 23S rRNA in the assembled 50S subunit and ribosome. Its function is as follows. Forms part of the polypeptide exit tunnel. This is Large ribosomal subunit protein uL4 from Borreliella afzelii (strain PKo) (Borrelia afzelii).